The following is a 1064-amino-acid chain: DNA-directed RNA polymerase subunit beta (1064 aa).

Belongs to the RNA polymerase beta chain family. In terms of assembly, in plastids the minimal PEP RNA polymerase catalytic core is composed of four subunits: alpha, beta, beta', and beta''. When a (nuclear-encoded) sigma factor is associated with the core the holoenzyme is formed, which can initiate transcription.

Its subcellular location is the plastid. It localises to the chloroplast. The enzyme catalyses RNA(n) + a ribonucleoside 5'-triphosphate = RNA(n+1) + diphosphate. Its function is as follows. DNA-dependent RNA polymerase catalyzes the transcription of DNA into RNA using the four ribonucleoside triphosphates as substrates. In Jasminum nudiflorum (Winter jasmine), this protein is DNA-directed RNA polymerase subunit beta.